Here is a 328-residue protein sequence, read N- to C-terminus: Arabinose 5-phosphate isomerase KdsD (328 aa).

The 144-residue stretch at 41–184 (ACEKMFNCTG…AVALLKARGF (144 aa)) folds into the SIS domain. Residues 75–76 (GT), histidine 82, histidine 88, 114–123 (ALIPVLKRLH), and 148–150 (KVP) contribute to the substrate site. Residue histidine 82 coordinates Zn(2+). A CBS 1 domain is found at 210–268 (MHTGDEIPHVNKHATLRDALLEITRKNLGMTVICDESMKIDGIFTDGDLRRMFDMGGDM). Glutamate 275 is a binding site for substrate. The region spanning 277–328 (MTPGGIRVRPGILAVDALNLMQSRHITSVLVADGDQLLGVLHMHDLLRAGVV) is the CBS 2 domain.

The protein belongs to the SIS family. GutQ/KpsF subfamily. As to quaternary structure, homotetramer.

It carries out the reaction D-arabinose 5-phosphate = D-ribulose 5-phosphate. Its pathway is carbohydrate biosynthesis; 3-deoxy-D-manno-octulosonate biosynthesis; 3-deoxy-D-manno-octulosonate from D-ribulose 5-phosphate: step 1/3. The protein operates within bacterial outer membrane biogenesis; lipopolysaccharide biosynthesis. In terms of biological role, involved in the biosynthesis of 3-deoxy-D-manno-octulosonate (KDO), a unique 8-carbon sugar component of lipopolysaccharides (LPSs). Catalyzes the reversible aldol-ketol isomerization between D-ribulose 5-phosphate (Ru5P) and D-arabinose 5-phosphate (A5P). This Salmonella typhi protein is Arabinose 5-phosphate isomerase KdsD (kdsD).